The sequence spans 208 residues: Guanylate kinase (208 aa).

In terms of domain architecture, Guanylate kinase-like spans 4–185 (GNLYILSAPS…TLKDLQSILQ (182 aa)). 11 to 18 (APSGAGKS) lines the ATP pocket.

Belongs to the guanylate kinase family.

The protein resides in the cytoplasm. It catalyses the reaction GMP + ATP = GDP + ADP. Functionally, essential for recycling GMP and indirectly, cGMP. This Haemophilus influenzae (strain 86-028NP) protein is Guanylate kinase.